The chain runs to 201 residues: MIAYIKGTLNSLGDESLIVDVGGIGYEIVCPNPFVFQDLLNQQIHIQTYHHVREDAQILFGFQNRDEKYLFTKLISVSGIGPKGALAILAGVDISGFIAAVENEDDKFLTSFPGVGKKTARQIILDLKGKLTSVFSITDEQQKSSVSNVNNNEVYSEAMEALKALGYTDKEVKQVLPHLKKDNDALSVDEAIRKALALLAK.

The tract at residues 1-63 is domain I; sequence MIAYIKGTLN…EDAQILFGFQ (63 aa). The interval 64 to 142 is domain II; sequence NRDEKYLFTK…SVFSITDEQQ (79 aa). Residues 143–149 are flexible linker; the sequence is KSSVSNV. Positions 150-201 are domain III; it reads NNNEVYSEAMEALKALGYTDKEVKQVLPHLKKDNDALSVDEAIRKALALLAK.

It belongs to the RuvA family. As to quaternary structure, homotetramer. Forms an RuvA(8)-RuvB(12)-Holliday junction (HJ) complex. HJ DNA is sandwiched between 2 RuvA tetramers; dsDNA enters through RuvA and exits via RuvB. An RuvB hexamer assembles on each DNA strand where it exits the tetramer. Each RuvB hexamer is contacted by two RuvA subunits (via domain III) on 2 adjacent RuvB subunits; this complex drives branch migration. In the full resolvosome a probable DNA-RuvA(4)-RuvB(12)-RuvC(2) complex forms which resolves the HJ.

Its subcellular location is the cytoplasm. In terms of biological role, the RuvA-RuvB-RuvC complex processes Holliday junction (HJ) DNA during genetic recombination and DNA repair, while the RuvA-RuvB complex plays an important role in the rescue of blocked DNA replication forks via replication fork reversal (RFR). RuvA specifically binds to HJ cruciform DNA, conferring on it an open structure. The RuvB hexamer acts as an ATP-dependent pump, pulling dsDNA into and through the RuvAB complex. HJ branch migration allows RuvC to scan DNA until it finds its consensus sequence, where it cleaves and resolves the cruciform DNA. In Oceanobacillus iheyensis (strain DSM 14371 / CIP 107618 / JCM 11309 / KCTC 3954 / HTE831), this protein is Holliday junction branch migration complex subunit RuvA.